A 376-amino-acid polypeptide reads, in one-letter code: 4-hydroxy-3-methylbut-2-enyl diphosphate reductase (376 aa).

[4Fe-4S] cluster is bound at residue C19. (2E)-4-hydroxy-3-methylbut-2-enyl diphosphate-binding residues include H48 and H99. Positions 48 and 99 each coordinate dimethylallyl diphosphate. Isopentenyl diphosphate contacts are provided by H48 and H99. C121 is a binding site for [4Fe-4S] cluster. H149 provides a ligand contact to (2E)-4-hydroxy-3-methylbut-2-enyl diphosphate. H149 contacts dimethylallyl diphosphate. Position 149 (H149) interacts with isopentenyl diphosphate. The Proton donor role is filled by E151. Residue T208 coordinates (2E)-4-hydroxy-3-methylbut-2-enyl diphosphate. C236 contributes to the [4Fe-4S] cluster binding site. 3 residues coordinate (2E)-4-hydroxy-3-methylbut-2-enyl diphosphate: S264, N266, and S307. Residues S264, N266, and S307 each coordinate dimethylallyl diphosphate. Isopentenyl diphosphate is bound by residues S264, N266, and S307.

This sequence belongs to the IspH family. Requires [4Fe-4S] cluster as cofactor.

It carries out the reaction isopentenyl diphosphate + 2 oxidized [2Fe-2S]-[ferredoxin] + H2O = (2E)-4-hydroxy-3-methylbut-2-enyl diphosphate + 2 reduced [2Fe-2S]-[ferredoxin] + 2 H(+). The enzyme catalyses dimethylallyl diphosphate + 2 oxidized [2Fe-2S]-[ferredoxin] + H2O = (2E)-4-hydroxy-3-methylbut-2-enyl diphosphate + 2 reduced [2Fe-2S]-[ferredoxin] + 2 H(+). The protein operates within isoprenoid biosynthesis; dimethylallyl diphosphate biosynthesis; dimethylallyl diphosphate from (2E)-4-hydroxy-3-methylbutenyl diphosphate: step 1/1. Its pathway is isoprenoid biosynthesis; isopentenyl diphosphate biosynthesis via DXP pathway; isopentenyl diphosphate from 1-deoxy-D-xylulose 5-phosphate: step 6/6. Its function is as follows. Catalyzes the conversion of 1-hydroxy-2-methyl-2-(E)-butenyl 4-diphosphate (HMBPP) into a mixture of isopentenyl diphosphate (IPP) and dimethylallyl diphosphate (DMAPP). Acts in the terminal step of the DOXP/MEP pathway for isoprenoid precursor biosynthesis. This is 4-hydroxy-3-methylbut-2-enyl diphosphate reductase from Treponema pallidum (strain Nichols).